Reading from the N-terminus, the 333-residue chain is L-lactate dehydrogenase A chain (333 aa).

Residues 30 to 58 (GMVGMAAAISILLKDLTDELALVDVMEDK) and arginine 100 contribute to the NAD(+) site. The substrate site is built by arginine 107, asparagine 139, and arginine 170. Asparagine 139 provides a ligand contact to NAD(+). Residue histidine 194 is the Proton acceptor of the active site. Threonine 249 lines the substrate pocket.

The protein belongs to the LDH/MDH superfamily. LDH family. In terms of assembly, homotetramer.

The protein localises to the cytoplasm. It catalyses the reaction (S)-lactate + NAD(+) = pyruvate + NADH + H(+). The protein operates within fermentation; pyruvate fermentation to lactate; (S)-lactate from pyruvate: step 1/1. The protein is L-lactate dehydrogenase A chain (ldha) of Cyprinus carpio (Common carp).